We begin with the raw amino-acid sequence, 260 residues long: 3'-5' ssDNA/RNA exonuclease TatD (260 aa).

Residues glutamate 92, histidine 128, and histidine 153 each coordinate a divalent metal cation.

Belongs to the metallo-dependent hydrolases superfamily. TatD-type hydrolase family. TatD subfamily. As to quaternary structure, monomer. The cofactor is Mg(2+).

It localises to the cytoplasm. 3'-5' exonuclease that prefers single-stranded DNA and RNA. May play a role in the H(2)O(2)-induced DNA damage repair. The polypeptide is 3'-5' ssDNA/RNA exonuclease TatD (Pantoea ananatis (strain LMG 20103)).